A 544-amino-acid chain; its full sequence is Chaperonin GroEL (544 aa).

ATP-binding positions include 30–33, Lys-51, 87–91, Gly-415, 481–483, and Asp-497; these read TLGP, DGTTT, and DAL.

Belongs to the chaperonin (HSP60) family. Forms a cylinder of 14 subunits composed of two heptameric rings stacked back-to-back. Interacts with the co-chaperonin GroES.

It localises to the cytoplasm. It catalyses the reaction ATP + H2O + a folded polypeptide = ADP + phosphate + an unfolded polypeptide.. In terms of biological role, together with its co-chaperonin GroES, plays an essential role in assisting protein folding. The GroEL-GroES system forms a nano-cage that allows encapsulation of the non-native substrate proteins and provides a physical environment optimized to promote and accelerate protein folding. This chain is Chaperonin GroEL, found in Chlamydia trachomatis serovar A (strain ATCC VR-571B / DSM 19440 / HAR-13).